We begin with the raw amino-acid sequence, 956 residues long: Calsyntenin-3 (956 aa).

An N-terminal signal peptide occupies residues 1–19; that stretch reads MTLLLVSLLLASLLQISSG. Topologically, residues 1-21 are cytoplasmic; it reads MTLLLVSLLLASLLQISSGNK. The Extracellular portion of the chain corresponds to 20–847; that stretch reads NKANKHKPWI…SHRNSMVPSA (828 aa). The helical intramembrane region spans 22–42; it reads ANKHKPWIEAEYQGIVMENDN. 2 consecutive Cadherin domains span residues 29–145 and 146–246; these read IEAE…APVF and VERL…KPSW. The Cytoplasmic segment spans residues 43–73; that stretch reads TVLLNPPLFALDKDAPLRYAGEICGFRLHGS. Residues 74 to 94 constitute an intramembrane region (helical); sequence GVPFEAVILDKATGEGLIRAK. Over 95–139 the chain is Cytoplasmic; the sequence is EPVDCEAQKEHTFTIQAYDCGEGPDGTNTKKSHKATVHVRVNDVN. The segment at residues 140–160 is an intramembrane region (helical); the sequence is EFAPVFVERLYRAAVTEGKLY. Topologically, residues 161–248 are cytoplasmic; it reads DRILRVEAID…KPTCKPSWQG (88 aa). A helical transmembrane segment spans residues 249–269; sequence WNKRIEYAPGAGSLALFPGIR. The Lumenal portion of the chain corresponds to 270-357; it reads LETCDEPLWN…GTQAVQVPLG (88 aa). 5 N-linked (GlcNAc...) asparagine glycosylation sites follow: Asn299, Asn327, Asn347, Asn507, and Asn740. The helical transmembrane segment at 848–868 threads the bilayer; it reads ATLIIVVCVGFLVLMVILGLV. The Cytoplasmic portion of the chain corresponds to 869–956; that stretch reads RIHSLHRRVS…RIIESPPHRY (88 aa). Residues 916 to 956 are disordered; the sequence is QTCVAGVAGGQQEEEDSSDSEAADSPSSDERRIIESPPHRY. Residues 927-937 show a composition bias toward acidic residues; that stretch reads QEEEDSSDSEA. The segment covering 943-956 has biased composition (basic and acidic residues); that stretch reads SDERRIIESPPHRY.

Belongs to the calsyntenin family. As to quaternary structure, interacts (via cadherin domains) with both alpha and beta isoforms of neurexins (NRXN1, NRXN2 and NRXN3). Directly interacts with APBA2. Forms a tripartite complex with APBA2 and APP. Interacts with low affinity with KLC1. Interacts with SLC23A2/SVCT2. Interacts with CIDEA; inhibiting the lipid transferase activity of CIDEA. Interacts with CIDEC; inhibiting the lipid transferase activity of CIDEC. Post-translationally, proteolytically processed under normal cellular conditions. A primary zeta-cleavage generates a large extracellular (soluble) N-terminal domain (sAlc) and a short C-terminal transmembrane fragment (CTF1). A secondary cleavage catalyzed by gamma-secretase within the transmembrane domain releases the beta-Alc-beta chain in the extracellular milieu and produces an intracellular fragment (AlcICD). This processing is strongly suppressed in the tripartite complex formed with APBA2 and APP, which seems to prevent the association with gamma-secretase. In terms of processing, ubiquitinated: endoplasmic reticulum-localized protein is ubiquitinated and degraded by the endoplasmic reticulum-associated degradation (ERAD) pathway. In terms of tissue distribution, restricted to the brain (at protein level). In the cerebral cortex, found in the somas and neuropil of all layers. Expressed at highest levels in neurons of cortical layer 5 and, at lower levels, in neurons of the upper layers. Highly expressed in Purkinje cells. Also found in a few scattered interneurons throughout the granule cell layer and occasionally in neurons in the molecular layer (at protein level). In all layers, high levels in a subpopulation of presumptive GABAergic neurons (based on morphology). Expression is restricted to adipose tissue, with high expression in thermogenic adipocytes (brown adipose tissue).

It is found in the postsynaptic cell membrane. The protein localises to the endoplasmic reticulum membrane. The protein resides in the golgi apparatus membrane. It localises to the cell projection. Its subcellular location is the dendrite. It is found in the lipid droplet. Postsynaptic adhesion molecule that binds to presynaptic neurexins to mediate both excitatory and inhibitory synapse formation. Promotes synapse development by acting as a cell adhesion molecule at the postsynaptic membrane, which associates with both neurexin-alpha and neurexin-beta proteins at the presynaptic membrane. Regulates the balance between excitatory and inhibitory synapses by inhibiting formation of excitatory parallel-fiber synapses and promoting formation of inhibitory synapses in the same neuron. May also be involved in ascorbate (vitamin C) uptake via its interaction with SLC23A2/SVCT2. Complex formation with APBA2 and APP, stabilizes APP metabolism and enhances APBA2-mediated suppression of beta-APP40 secretion, due to the retardation of intracellular APP maturation. Functionally, adipose-specific isoform that plays a key role in adaptive thermogenesis. Facilitates the efficient use of stored triglyceride by promoting multilocular morphology of thermogenic adipocytes: acts by inhibiting the activity of CIDEA and CIDEC on lipid droplets, thereby preventing lipid droplet fusion and facilitating lipid utilization. May also participate in adaptive thermogenesis by promoting sympathetic innervation of thermogenic adipose tissue: acts by driving secretion of neurotrophic factor S100B from brown adipocytes, stimulating neurite outgrowth from sympathetic neurons. The protein is Calsyntenin-3 of Mus musculus (Mouse).